A 246-amino-acid polypeptide reads, in one-letter code: Major prion protein (246 aa).

A signal peptide spans 1 to 15 (MLVLFVATWSDLGLC). Positions 16 to 223 (KKRPKPGGWN…ESQAYYQRGS (208 aa)) are interaction with GRB2, ERI3 and SYN1. A disordered region spans residues 18 to 102 (RPKPGGWNTG…HKPSKPKTSM (85 aa)). 5 consecutive repeat copies span residues 44–52 (PQGGGGWGQ), 53–60 (PHGGGWGQ), 61–68 (PHGGGWGQ), 69–76 (PHGGGWGQ), and 77–84 (PHGGGWGQ). Residues 44–84 (PQGGGGWGQPHGGGWGQPHGGGWGQPHGGGWGQPHGGGWGQ) are 5 X 8 AA tandem repeats of P-H-G-G-G-W-G-Q. The span at 45-88 (QGGGGWGQPHGGGWGQPHGGGWGQPHGGGWGQPHGGGWGQGGGT) shows a compositional bias: gly residues. Cu(2+) is bound by residues His-54, Gly-55, Gly-56, His-62, Gly-63, Gly-64, His-70, Gly-71, Gly-72, His-78, Gly-79, and Gly-80. The span at 91-102 (QWHKPSKPKTSM) shows a compositional bias: basic residues. Cysteines 172 and 207 form a disulfide. 2 N-linked (GlcNAc...) asparagine glycosylation sites follow: Asn-174 and Asn-190. Ser-223 carries the GPI-anchor amidated serine lipid modification. Positions 224–246 (SMVLFSSPPVILLISFLIFLIVG) are cleaved as a propeptide — removed in mature form.

This sequence belongs to the prion family. As to quaternary structure, monomer and homodimer. Has a tendency to aggregate into amyloid fibrils containing a cross-beta spine, formed by a steric zipper of superposed beta-strands. Soluble oligomers may represent an intermediate stage on the path to fibril formation. Copper binding may promote oligomerization. Interacts with GRB2, APP, ERI3/PRNPIP and SYN1. Mislocalized cytosolically exposed PrP interacts with MGRN1; this interaction alters MGRN1 subcellular location and causes lysosomal enlargement. Interacts with KIAA1191.

The protein localises to the cell membrane. It localises to the golgi apparatus. Its function is as follows. Its primary physiological function is unclear. Has cytoprotective activity against internal or environmental stresses. May play a role in neuronal development and synaptic plasticity. May be required for neuronal myelin sheath maintenance. May play a role in iron uptake and iron homeostasis. Soluble oligomers are toxic to cultured neuroblastoma cells and induce apoptosis (in vitro). Association with GPC1 (via its heparan sulfate chains) targets PRNP to lipid rafts. Also provides Cu(2+) or Zn(2+) for the ascorbate-mediated GPC1 deaminase degradation of its heparan sulfate side chains. This Cercocebus atys (Sooty mangabey) protein is Major prion protein (PRNP).